Reading from the N-terminus, the 763-residue chain is Phosphoglycerol transferase I (763 aa).

4 consecutive transmembrane segments (helical) span residues 1 to 21 (MSEL…AWKA), 26 to 46 (WWFA…ITLF), 77 to 97 (ILPG…LGWI), and 108 to 128 (FGYS…SPAF).

Belongs to the OpgB family.

The protein localises to the cell inner membrane. It catalyses the reaction a phosphatidylglycerol + a membrane-derived-oligosaccharide D-glucose = a 1,2-diacyl-sn-glycerol + a membrane-derived-oligosaccharide 6-(glycerophospho)-D-glucose.. The protein operates within glycan metabolism; osmoregulated periplasmic glucan (OPG) biosynthesis. Transfers a phosphoglycerol residue from phosphatidylglycerol to the membrane-bound nascent glucan backbones. The sequence is that of Phosphoglycerol transferase I from Escherichia coli O17:K52:H18 (strain UMN026 / ExPEC).